Reading from the N-terminus, the 413-residue chain is Probable aminotransferase sirI (413 aa).

Lysine 255 is modified (N6-(pyridoxal phosphate)lysine).

Belongs to the class-I pyridoxal-phosphate-dependent aminotransferase family. Pyridoxal 5'-phosphate serves as cofactor.

It participates in mycotoxin biosynthesis. Probable aminotransferase; part of the gene cluster that mediates the biosynthesis of sirodesmin PL, an epipolythiodioxopiperazine (ETP) characterized by a disulfide bridged cyclic dipeptide and that acts as a phytotoxin which is involved in the blackleg didease of canola. SirD catalyzes the O-prenylation of L-tyrosine (L-Tyr) in the presence of dimethylallyl diphosphate (DMAPP) to yield 4-O-dimethylallyl-L-Tyr, and therefore represents probably the first pathway-specific enzyme in the biosynthesis of sirodesmin PL. 4-O-dimethylallyl-L-Tyr, then undergoes condensation with L-Ser in a reaction catalyzed by the non-ribosomal peptide synthase sirP to form the diketopiperazine (DKP) backbone. Further bishydroxylation of the DKP performed by the cytochrome P450 monooxygenase sirC leads to the production of the intermediate phomamide. This step is essential to form the reactive thiol group required for toxicity of sirodesmin PL. The next steps of sirodesmin biosynthesis are not well understood yet, but some predictions could be made from intermediate compounds identification. Phomamide is converted into phomalizarine via oxidation, probably by sirT. Further oxidation, methylation (by sirM or sirN) and reduction steps convert phomalizarine to deacetyl sirodesmin. Finally, acetyltransferase sirH probably acetylates deacetyl sirodesmin to produce sirodesmin PL. The chain is Probable aminotransferase sirI from Leptosphaeria maculans (Blackleg fungus).